Consider the following 152-residue polypeptide: MANSERTFIAIKPDGVQRGLIGEIIKRFEQKGFRLVAMKFMRASEDLLKEHYIDLKDRPFFAGLVKYMHSGPVVAMVWEGLNVVKTGRVMLGETNPADSKPGTIRGDFCIQVGRNIIHGSDSVESAEKEIALWFHPEELVNYKSCAQNWIYE.

ATP contacts are provided by Lys12, Phe60, Arg88, Thr94, Arg105, and Asn115. Residue His118 is the Pros-phosphohistidine intermediate of the active site.

This sequence belongs to the NDK family. As to quaternary structure, homohexamer. Requires Mg(2+) as cofactor. The N-terminus is blocked.

The protein resides in the cytoplasm. The protein localises to the cell membrane. Its subcellular location is the nucleus. The enzyme catalyses a 2'-deoxyribonucleoside 5'-diphosphate + ATP = a 2'-deoxyribonucleoside 5'-triphosphate + ADP. It carries out the reaction a ribonucleoside 5'-diphosphate + ATP = a ribonucleoside 5'-triphosphate + ADP. With respect to regulation, autophosphorylation at His-118 increases serine/threonine protein kinase activity of the enzyme. Interaction with the SET complex inhibits exonuclease activity. Its function is as follows. Major role in the synthesis of nucleoside triphosphates other than ATP. Possesses nucleoside-diphosphate kinase, serine/threonine-specific protein kinase, geranyl and farnesyl pyrophosphate kinase, histidine protein kinase and 3'-5' exonuclease activities. Involved in cell proliferation, differentiation and development, signal transduction, G protein-coupled receptor endocytosis, and gene expression. Required for neural development including neural patterning and cell fate determination. In Bos taurus (Bovine), this protein is Nucleoside diphosphate kinase A 1 (NME1-1).